A 255-amino-acid chain; its full sequence is 5'-nucleotidase SurE (255 aa).

Asp-8, Asp-9, Ser-40, and Asn-92 together coordinate a divalent metal cation.

This sequence belongs to the SurE nucleotidase family. The cofactor is a divalent metal cation.

It is found in the cytoplasm. It catalyses the reaction a ribonucleoside 5'-phosphate + H2O = a ribonucleoside + phosphate. Its function is as follows. Nucleotidase that shows phosphatase activity on nucleoside 5'-monophosphates. The polypeptide is 5'-nucleotidase SurE (Brucella canis (strain ATCC 23365 / NCTC 10854 / RM-666)).